A 44-amino-acid chain; its full sequence is Viresin (44 aa).

Belongs to the insect A10/OS-D protein family.

It localises to the secreted. Its function is as follows. Has antibacterial activity against the Gram-negative bacteria E.coli and E.cloacae, but not against the Gram-negative bacteria P.aeruginosa, P.vulgaris, K.pneumoniae and S.enteritidis or the Gram-positive bacteria S.aureus, S.epidermidis and S.salivarius. This chain is Viresin, found in Heliothis virescens (Tobacco budworm moth).